The following is a 145-amino-acid chain: Transcriptional regulator SlyA (145 aa).

The region spanning 2–135 (ELPLGSDLAR…LALLVARLEK (134 aa)) is the HTH marR-type domain. Positions 49–72 (QIQLAKAIGIEQPSLVRTLDQLEE) form a DNA-binding region, H-T-H motif.

It belongs to the SlyA family. Homodimer.

In terms of biological role, transcription regulator that can specifically activate or repress expression of target genes. This chain is Transcriptional regulator SlyA, found in Pectobacterium atrosepticum (strain SCRI 1043 / ATCC BAA-672) (Erwinia carotovora subsp. atroseptica).